Consider the following 399-residue polypeptide: Homoserine O-acetyltransferase (399 aa).

The AB hydrolase-1 domain maps to 63 to 372; the sequence is NAILVCHALT…TDRGHDAFLL (310 aa). Residue Ser168 is the Nucleophile of the active site. Arg238 lines the substrate pocket. Catalysis depends on residues Asp334 and His367. Position 368 (Asp368) interacts with substrate.

The protein belongs to the AB hydrolase superfamily. MetX family. As to quaternary structure, homodimer.

The protein localises to the cytoplasm. The enzyme catalyses L-homoserine + acetyl-CoA = O-acetyl-L-homoserine + CoA. It participates in amino-acid biosynthesis; L-methionine biosynthesis via de novo pathway; O-acetyl-L-homoserine from L-homoserine: step 1/1. Functionally, transfers an acetyl group from acetyl-CoA to L-homoserine, forming acetyl-L-homoserine. The sequence is that of Homoserine O-acetyltransferase from Nitrobacter hamburgensis (strain DSM 10229 / NCIMB 13809 / X14).